The sequence spans 191 residues: Peptidyl-tRNA hydrolase (191 aa).

Tyrosine 14 is a tRNA binding site. The active-site Proton acceptor is histidine 19. Residues tyrosine 64, asparagine 66, and asparagine 112 each coordinate tRNA.

Belongs to the PTH family. As to quaternary structure, monomer.

It is found in the cytoplasm. It carries out the reaction an N-acyl-L-alpha-aminoacyl-tRNA + H2O = an N-acyl-L-amino acid + a tRNA + H(+). Functionally, hydrolyzes ribosome-free peptidyl-tRNAs (with 1 or more amino acids incorporated), which drop off the ribosome during protein synthesis, or as a result of ribosome stalling. Catalyzes the release of premature peptidyl moieties from peptidyl-tRNA molecules trapped in stalled 50S ribosomal subunits, and thus maintains levels of free tRNAs and 50S ribosomes. This is Peptidyl-tRNA hydrolase from Clostridium botulinum (strain Eklund 17B / Type B).